We begin with the raw amino-acid sequence, 332 residues long: Aquaporin-7-1 (332 aa).

Residues 1 to 66 (MSGQHQITEQ…RHAIRMPMAE (66 aa)) lie on the Cytoplasmic side of the membrane. Residues 67–87 (FFGVALLIIFGAGSACQVVLS) traverse the membrane as a helical segment. Residues 88–100 (TNPNVASSDRGSF) lie on the Extracellular side of the membrane. Residues 101–121 (LSINLGWAIGIAMGAWVSGGI) form a helical membrane-spanning segment. The Cytoplasmic segment spans residues 122–144 (SGGHINPAITIAMATYRGFPWRR). Positions 127-129 (NPA) match the NPA 1 motif. The helical transmembrane segment at 145–165 (VPSYIFAQVLGGVVGAALVYA) threads the bilayer. Residues 166–199 (NYIHAIDIFEGGRHVRTQATASLFATYALPYMTQ) are Extracellular-facing. A helical membrane pass occupies residues 200–220 (VSCFFSEFLATAVLSMMVLAL). The Cytoplasmic segment spans residues 221–230 (TDNRNGAPTN). Residues 231-251 (GLLPFALFVLFIGLGASLGME) form a helical membrane-spanning segment. Topologically, residues 252-283 (TAYALNPARDFGPRLFLAMSGYGKALFNYRSQ) are extracellular. An NPA 2 motif is present at residues 257–259 (NPA). A helical membrane pass occupies residues 284 to 304 (YWLWAPIIAPVLGAQAGGLLY). At 305–332 (DTFLYDGDNSPIKWRRASSQECQLAEVV) the chain is on the cytoplasmic side.

Belongs to the MIP/aquaporin (TC 1.A.8) family.

It localises to the membrane. The enzyme catalyses H2O(in) = H2O(out). Its function is as follows. Water channel required to facilitate the transport of water across membranes. Does not mediate the transport carbon dioxide across the membrane. This is Aquaporin-7-1 from Laccaria bicolor (Bicoloured deceiver).